Consider the following 32-residue polypeptide: Cytochrome b6-f complex subunit 7 (32 aa).

A helical membrane pass occupies residues 9 to 29 (AILSSVLVLVGLAVGFLLLKV).

This sequence belongs to the PetM family. As to quaternary structure, the 4 large subunits of the cytochrome b6-f complex are cytochrome b6, subunit IV (17 kDa polypeptide, PetD), cytochrome f and the Rieske protein, while the 4 small subunits are PetG, PetL, PetM and PetN. The complex functions as a dimer.

It is found in the plastid. It localises to the chloroplast thylakoid membrane. Functionally, component of the cytochrome b6-f complex, which mediates electron transfer between photosystem II (PSII) and photosystem I (PSI), cyclic electron flow around PSI, and state transitions. The chain is Cytochrome b6-f complex subunit 7 from Porphyra purpurea (Red seaweed).